The primary structure comprises 303 residues: mRNA-capping enzyme subunit beta (303 aa).

It belongs to the fungal TPase family. Heterodimer. The mRNA-capping enzyme is composed of two separate chains alpha and beta, respectively a mRNA guanylyltransferase and an mRNA 5'-triphosphate monophosphatase. Mg(2+) is required as a cofactor.

It is found in the nucleus. It catalyses the reaction a 5'-end triphospho-ribonucleoside in mRNA + H2O = a 5'-end diphospho-ribonucleoside in mRNA + phosphate + H(+). First step of mRNA capping. Converts the 5'-triphosphate end of a nascent mRNA chain into a diphosphate end. In Schizosaccharomyces pombe (strain 972 / ATCC 24843) (Fission yeast), this protein is mRNA-capping enzyme subunit beta (pct1).